The following is an 843-amino-acid chain: Glycogen phosphorylase, brain form (843 aa).

Residue alanine 2 is modified to N-acetylalanine. Serine 15 carries the phosphoserine; by PHK; in form phosphorylase A modification. AMP contacts are provided by aspartate 43, tyrosine 197, and arginine 310. Residue tyrosine 197 is modified to Phosphotyrosine. Phosphotyrosine is present on tyrosine 473. Pyridoxal 5'-phosphate is bound at residue lysine 569. A pyridoxal 5'-phosphate region spans residues 677-678 (TG). Lysine 681 carries the post-translational modification N6-(pyridoxal phosphate)lysine.

This sequence belongs to the glycogen phosphorylase family. As to quaternary structure, homodimer. Dimers associate into a tetramer to form the enzymatically active phosphorylase A. Pyridoxal 5'-phosphate is required as a cofactor. In terms of processing, phosphorylation of Ser-15 converts phosphorylase B (unphosphorylated) to phosphorylase A.

It catalyses the reaction [(1-&gt;4)-alpha-D-glucosyl](n) + phosphate = [(1-&gt;4)-alpha-D-glucosyl](n-1) + alpha-D-glucose 1-phosphate. With respect to regulation, activity of phosphorylase is controlled both by allosteric means (through the non-covalent binding of metabolites) and by covalent modification. Thus AMP allosterically activates, whereas ATP, ADP, and glucose-6-phosphate allosterically inhibit, phosphorylase B. Glycogen phosphorylase that regulates glycogen mobilization. Phosphorylase is an important allosteric enzyme in carbohydrate metabolism. Enzymes from different sources differ in their regulatory mechanisms and in their natural substrates. However, all known phosphorylases share catalytic and structural properties. The sequence is that of Glycogen phosphorylase, brain form (PYGB) from Ovis aries (Sheep).